The following is a 178-amino-acid chain: ATP synthase subunit delta (178 aa).

The protein belongs to the ATPase delta chain family. F-type ATPases have 2 components, F(1) - the catalytic core - and F(0) - the membrane proton channel. F(1) has five subunits: alpha(3), beta(3), gamma(1), delta(1), epsilon(1). F(0) has three main subunits: a(1), b(2) and c(10-14). The alpha and beta chains form an alternating ring which encloses part of the gamma chain. F(1) is attached to F(0) by a central stalk formed by the gamma and epsilon chains, while a peripheral stalk is formed by the delta and b chains.

Its subcellular location is the cell inner membrane. Its function is as follows. F(1)F(0) ATP synthase produces ATP from ADP in the presence of a proton or sodium gradient. F-type ATPases consist of two structural domains, F(1) containing the extramembraneous catalytic core and F(0) containing the membrane proton channel, linked together by a central stalk and a peripheral stalk. During catalysis, ATP synthesis in the catalytic domain of F(1) is coupled via a rotary mechanism of the central stalk subunits to proton translocation. Functionally, this protein is part of the stalk that links CF(0) to CF(1). It either transmits conformational changes from CF(0) to CF(1) or is implicated in proton conduction. The protein is ATP synthase subunit delta of Nitrosomonas eutropha (strain DSM 101675 / C91 / Nm57).